The following is a 389-amino-acid chain: Putative glutamate--cysteine ligase 2 (389 aa).

Belongs to the glutamate--cysteine ligase type 2 family. YbdK subfamily.

The catalysed reaction is L-cysteine + L-glutamate + ATP = gamma-L-glutamyl-L-cysteine + ADP + phosphate + H(+). ATP-dependent carboxylate-amine ligase which exhibits weak glutamate--cysteine ligase activity. This is Putative glutamate--cysteine ligase 2 from Rhodospirillum rubrum (strain ATCC 11170 / ATH 1.1.1 / DSM 467 / LMG 4362 / NCIMB 8255 / S1).